Consider the following 323-residue polypeptide: Mycothiol acetyltransferase (323 aa).

N-acetyltransferase domains lie at 21-176 (ELLR…VSLR) and 173-323 (VSLR…LTKN). Residue glutamate 44 participates in 1D-myo-inositol 2-(L-cysteinylamino)-2-deoxy-alpha-D-glucopyranoside binding. 98-100 (LAV) is a binding site for acetyl-CoA. 1D-myo-inositol 2-(L-cysteinylamino)-2-deoxy-alpha-D-glucopyranoside-binding residues include glutamate 200, lysine 240, and glutamate 253. Acetyl-CoA-binding positions include 257–259 (VGV) and 264–270 (QGLGLGK). Tyrosine 291 is a binding site for 1D-myo-inositol 2-(L-cysteinylamino)-2-deoxy-alpha-D-glucopyranoside.

It belongs to the acetyltransferase family. MshD subfamily. In terms of assembly, monomer.

It catalyses the reaction 1D-myo-inositol 2-(L-cysteinylamino)-2-deoxy-alpha-D-glucopyranoside + acetyl-CoA = mycothiol + CoA + H(+). In terms of biological role, catalyzes the transfer of acetyl from acetyl-CoA to desacetylmycothiol (Cys-GlcN-Ins) to form mycothiol. This chain is Mycothiol acetyltransferase, found in Paenarthrobacter aurescens (strain TC1).